The sequence spans 366 residues: MIVTETIIRFENVTKQFDNDPPVLDNVSFEIEKGKFYTLLGPSGCGKTTILRLIAGFLEASEGQIYLGDKVINQIPANKRPVNTVFQDYALFPHLNVYENVAFGLRIKKLKKDAIDKKVQEALRFVNLKGYEKREISEMSGGQRQRVAIARAIVNEPEVILLDEPLSALDLKLRTEMQYELRDLQKRLGITFIFVTHDQEEALAMSDEIFVLNKGEIQQSGTPIDIYDEPINKFVADFIGESNIVNGKMIQDFEVEFVERRFECVDQGFRPNEVVEVVIRPEDLEITSAEKGKLQVTVDWMLFRGVHYEVGCIDIDGNEWLVHTTRKVRVGDKIGLAFEPEAIHVMRLGETEEEFDKRLDSYDEVQ.

The ABC transporter domain occupies 8–239 (IRFENVTKQF…PINKFVADFI (232 aa)). 41 to 48 (GPSGCGKT) serves as a coordination point for ATP.

It belongs to the ABC transporter superfamily. Spermidine/putrescine importer (TC 3.A.1.11.1) family. As to quaternary structure, the complex is composed of two ATP-binding proteins (PotA), two transmembrane proteins (PotB and PotC) and a solute-binding protein (PotD).

It localises to the cell membrane. It carries out the reaction ATP + H2O + polyamine-[polyamine-binding protein]Side 1 = ADP + phosphate + polyamineSide 2 + [polyamine-binding protein]Side 1.. Functionally, part of the ABC transporter complex PotABCD involved in spermidine/putrescine import. Responsible for energy coupling to the transport system. The chain is Spermidine/putrescine import ATP-binding protein PotA from Listeria innocua serovar 6a (strain ATCC BAA-680 / CLIP 11262).